A 157-amino-acid chain; its full sequence is Cell cycle control protein 50C (157 aa).

At 1 to 34 the chain is on the cytoplasmic side; sequence MEERAQHCLSRLLDNSALKQQELPIHRLYFTARR. Residues 35–55 traverse the membrane as a helical segment; it reads VLFVFFATGIFCLCMGIILIL. At 56–157 the chain is on the extracellular side; it reads SARSTQEIEI…LFLNQVDFSV (102 aa). Asn66 is a glycosylation site (N-linked (GlcNAc...) asparagine).

It belongs to the CDC50/LEM3 family.

It is found in the membrane. The protein is Cell cycle control protein 50C (TMEM30C) of Pan troglodytes (Chimpanzee).